Reading from the N-terminus, the 61-residue chain is Metallothionein-1 (61 aa).

Residue methionine 1 is modified to N-acetylmethionine. A beta region spans residues 1-29 (MDPNCSCSTGSTCTCSSSCGCKDCKCTSC). A divalent metal cation is bound by residues cysteine 5, cysteine 7, cysteine 13, cysteine 15, cysteine 19, cysteine 21, cysteine 24, cysteine 26, cysteine 29, cysteine 33, cysteine 34, cysteine 36, cysteine 37, cysteine 41, cysteine 44, cysteine 48, cysteine 50, cysteine 57, cysteine 59, and cysteine 60. Residues 30–61 (KKSCCSCCPVGCSKCAQGCVCKGASDKCTCCA) are alpha.

Belongs to the metallothionein superfamily. Type 1 family.

Functionally, metallothioneins have a high content of cysteine residues that bind various heavy metals; these proteins are transcriptionally regulated by both heavy metals and glucocorticoids. The chain is Metallothionein-1 (MT1) from Cricetulus griseus (Chinese hamster).